The following is an 867-amino-acid chain: Putative tyrosine-protein kinase F09A5.2 (867 aa).

2 helical membrane passes run 45-65 and 355-375; these read VMKI…FATS and LLLI…AFFV. N-linked (GlcNAc...) asparagine glycosylation is found at Asn395 and Asn423. The 291-residue stretch at 467–757 folds into the Protein kinase domain; the sequence is VQEDHLLGNG…FNEMRGEITV (291 aa). 473–481 is a binding site for ATP; it reads LGNGAFANV. 2 N-linked (GlcNAc...) asparagine glycosylation sites follow: Asn496 and Asn500. Position 516 (Lys516) interacts with ATP. Asn585 carries an N-linked (GlcNAc...) asparagine glycan. Asp626 acts as the Proton acceptor in catalysis. Disordered regions lie at residues 782-821 and 848-867; these read LTMQ…GTCA and SKSM…TYQS. The segment covering 801–810 has biased composition (acidic residues); that stretch reads DMDEDGDYDS. Residues 858-867 are compositionally biased toward polar residues; that stretch reads SNSTVSTYQS. Asn859 is a glycosylation site (N-linked (GlcNAc...) asparagine).

The protein belongs to the protein kinase superfamily. Tyr protein kinase family.

The protein resides in the membrane. The catalysed reaction is L-tyrosyl-[protein] + ATP = O-phospho-L-tyrosyl-[protein] + ADP + H(+). In Caenorhabditis elegans, this protein is Putative tyrosine-protein kinase F09A5.2.